We begin with the raw amino-acid sequence, 304 residues long: GDP-6-deoxy-D-mannose reductase (304 aa).

NADP(+) is bound by residues 13–14 (FV) and 39–40 (DL). Residue 105–106 (SG) coordinates substrate. Tyr-131 serves as a coordination point for NADP(+). Substrate contacts are provided by residues Asn-160, Arg-200, and 260-263 (RRAE).

Belongs to the NAD(P)-dependent epimerase/dehydratase family. GDP-6-deoxy-D-mannose reductase subfamily.

The catalysed reaction is GDP-alpha-D-rhamnose + NAD(+) = GDP-4-dehydro-alpha-D-rhamnose + NADH + H(+). It carries out the reaction GDP-alpha-D-rhamnose + NADP(+) = GDP-4-dehydro-alpha-D-rhamnose + NADPH + H(+). In terms of biological role, reductase that catalyzes the conversion of GDP-6-deoxy-D-mannose to GDP-4-dehydro-6-deoxy-D-mannose (GDP-D-rhamnose). The protein is GDP-6-deoxy-D-mannose reductase (rmd) of Pseudomonas aeruginosa (strain ATCC 15692 / DSM 22644 / CIP 104116 / JCM 14847 / LMG 12228 / 1C / PRS 101 / PAO1).